Consider the following 111-residue polypeptide: Small ribosomal subunit protein bS16 (111 aa).

This sequence belongs to the bacterial ribosomal protein bS16 family.

The sequence is that of Small ribosomal subunit protein bS16 from Rickettsia bellii (strain OSU 85-389).